The sequence spans 54 residues: Ovomucoid (54 aa).

The Kazal-like domain occupies 4 to 54 (VDCSGYPQSACPQDYVPFCGSDNKTYSNKCNFCNAVADSNGTLTLSHFGKC). 3 disulfide bridges follow: C6–C36, C14–C33, and C22–C54. N43 carries an N-linked (GlcNAc...) asparagine glycan.

The protein localises to the secreted. This chain is Ovomucoid, found in Gallirallus australis (Weka).